The primary structure comprises 374 residues: Hydroxylysine kinase (374 aa).

Aspartate 228 acts as the Proton acceptor in catalysis.

The protein belongs to the aminoglycoside phosphotransferase family.

The protein resides in the cytoplasm. It carries out the reaction (5R)-5-hydroxy-L-lysine + GTP = (5R)-5-phosphooxy-L-lysine + GDP + H(+). Functionally, catalyzes the GTP-dependent phosphorylation of 5-hydroxy-L-lysine. In Xenopus laevis (African clawed frog), this protein is Hydroxylysine kinase (hykk).